A 386-amino-acid polypeptide reads, in one-letter code: Oxytocin receptor (386 aa).

Positions 1–31 (MEGVLAANWSAEAVNSSAAPPEAEGNRTAGP) are disordered. The Extracellular segment spans residues 1 to 38 (MEGVLAANWSAEAVNSSAAPPEAEGNRTAGPPQRNEAL). Residues asparagine 8, asparagine 15, and asparagine 26 are each glycosylated (N-linked (GlcNAc...) asparagine). Residues 39-63 (ARVEVAVLCLILFLALSGNACVLLA) form a helical membrane-spanning segment. Topologically, residues 64–74 (LRTTRHKHSRL) are cytoplasmic. The helical transmembrane segment at 75–97 (FFFMKHLSIADLVVAVFQVLPQL) threads the bilayer. The Extracellular portion of the chain corresponds to 98-113 (LWDITFRFYGPDLLCR). Cysteine 112 and cysteine 187 are oxidised to a cystine. The helical transmembrane segment at 114–135 (LVKYLQVVGMFASTYLLLLMSL) threads the bilayer. Residues 136–154 (DRCLAICQPLRALRRPADR) lie on the Cytoplasmic side of the membrane. The helical transmembrane segment at 155 to 175 (LAVLATWLGCLVASAPQVHIF) threads the bilayer. Topologically, residues 176–202 (SLREVADGVFDCWAVFIQPWGPKAYIT) are extracellular. A helical membrane pass occupies residues 203–225 (WITLAVYIVPVIVLAACYGLISF). Over 226–277 (KIWQNLRLKTAAEAAEAIAGTEGAAAGSRGRAALARVSSVKLISKAKIRTVK) the chain is Cytoplasmic. Residues 278–296 (MTFIIVLAFIVCWTPFFFV) form a helical membrane-spanning segment. Topologically, residues 297–311 (QMWSVWDADAPKEAS) are extracellular. The helical transmembrane segment at 312–334 (AFIIAMLLASLNSCCNPWIYMLF) threads the bilayer. The Cytoplasmic segment spans residues 335–386 (TGHLFHELVQRFLCCSSSHLKTSRPGETSVSKKSNSSTFVLSQHSSSQKSCS). The segment covering 355–375 (KTSRPGETSVSKKSNSSTFVL) has biased composition (polar residues). The disordered stretch occupies residues 355 to 386 (KTSRPGETSVSKKSNSSTFVLSQHSSSQKSCS). Phosphoserine occurs at positions 368 and 370. Positions 376–386 (SQHSSSQKSCS) are enriched in low complexity.

This sequence belongs to the G-protein coupled receptor 1 family. Vasopressin/oxytocin receptor subfamily.

Its subcellular location is the cell membrane. Its function is as follows. Receptor for oxytocin. The activity of this receptor is mediated by G proteins which activate a phosphatidylinositol-calcium second messenger system. This chain is Oxytocin receptor (OXTR), found in Sus scrofa (Pig).